A 129-amino-acid chain; its full sequence is Glycine cleavage system H protein 2 (129 aa).

One can recognise a Lipoyl-binding domain in the interval 24 to 105 (SVTVGISDHA…PYVSWFFKLK (82 aa)). An N6-lipoyllysine modification is found at K65.

Belongs to the GcvH family. The glycine cleavage system is composed of four proteins: P, T, L and H. (R)-lipoate serves as cofactor.

In terms of biological role, the glycine cleavage system catalyzes the degradation of glycine. The H protein shuttles the methylamine group of glycine from the P protein to the T protein. In Pseudomonas aeruginosa (strain ATCC 15692 / DSM 22644 / CIP 104116 / JCM 14847 / LMG 12228 / 1C / PRS 101 / PAO1), this protein is Glycine cleavage system H protein 2.